The primary structure comprises 665 residues: Golgi-associated RAB2B interactor protein 3 (665 aa).

Disordered stretches follow at residues 211 to 240, 272 to 296, and 480 to 590; these read EIRGEGDQNSRPQSSPTVSEATSAAFAGGE, AAAGTAGPAAGPAAGTAGPAAGTAG, and SEGY…GSVS. The span at 219 to 232 shows a compositional bias: polar residues; it reads NSRPQSSPTVSEAT. The segment covering 499-513 has biased composition (basic and acidic residues); that stretch reads EAKEKRERREKDRTS. Composition is skewed to basic residues over residues 514–538 and 554–566; these read SRKSSHHRRTGMSRHSSKDKSRKTS and GHGRLRGKRHSSS. Positions 515-531 match the Bipartite nuclear localization signal motif; it reads RKSSHHRRTGMSRHSSK. Serine 652 bears the Phosphoserine mark.

This sequence belongs to the GARIN family. In terms of assembly, interacts (via N-terminus) with RAB2B (in GTP-bound form). Interacts with FRG1. As to expression, expressed in adult spermatocytes and spermatids.

It localises to the golgi apparatus. The protein resides in the nucleus. Its subcellular location is the cajal body. May be involved in RNA biogenesis. This Mus musculus (Mouse) protein is Golgi-associated RAB2B interactor protein 3.